The following is a 336-amino-acid chain: tRNA-dihydrouridine(20/20a) synthase (336 aa).

FMN contacts are provided by residues 24–26 (PMM) and Gln77. The active-site Proton donor is Cys107. FMN is bound by residues Lys146, His178, 218–220 (NGG), and 240–241 (GR).

This sequence belongs to the Dus family. DusA subfamily. The cofactor is FMN.

It catalyses the reaction 5,6-dihydrouridine(20) in tRNA + NADP(+) = uridine(20) in tRNA + NADPH + H(+). It carries out the reaction 5,6-dihydrouridine(20) in tRNA + NAD(+) = uridine(20) in tRNA + NADH + H(+). The enzyme catalyses 5,6-dihydrouridine(20a) in tRNA + NADP(+) = uridine(20a) in tRNA + NADPH + H(+). The catalysed reaction is 5,6-dihydrouridine(20a) in tRNA + NAD(+) = uridine(20a) in tRNA + NADH + H(+). In terms of biological role, catalyzes the synthesis of 5,6-dihydrouridine (D), a modified base found in the D-loop of most tRNAs, via the reduction of the C5-C6 double bond in target uridines. Specifically modifies U20 and U20a in tRNAs. The chain is tRNA-dihydrouridine(20/20a) synthase from Pseudomonas putida (strain ATCC 47054 / DSM 6125 / CFBP 8728 / NCIMB 11950 / KT2440).